Consider the following 69-residue polypeptide: Cell division protein ZapB (69 aa).

A coiled-coil region spans residues 6–68 (LEQLEARVQS…LGKMDQMNSE (63 aa)).

This sequence belongs to the ZapB family. As to quaternary structure, homodimer. The ends of the coiled-coil dimer bind to each other, forming polymers. Interacts with FtsZ.

It is found in the cytoplasm. Functionally, non-essential, abundant cell division factor that is required for proper Z-ring formation. It is recruited early to the divisome by direct interaction with FtsZ, stimulating Z-ring assembly and thereby promoting cell division earlier in the cell cycle. Its recruitment to the Z-ring requires functional FtsA or ZipA. The sequence is that of Cell division protein ZapB from Tolumonas auensis (strain DSM 9187 / NBRC 110442 / TA 4).